A 191-amino-acid chain; its full sequence is uncharacterized protein (191 aa).

An HTH tetR-type domain is found at 6 to 66; it reads GLTQKMIVDA…ELAVRGLTKL (61 aa). A DNA-binding region (H-T-H motif) is located at residues 29–48; sequence SLAALSKKMNVRPPSLYNHI.

This is an uncharacterized protein from Bacillus subtilis (strain 168).